Consider the following 411-residue polypeptide: Multifunctional CCA protein (411 aa).

ATP contacts are provided by Gly-8 and Arg-11. CTP is bound by residues Gly-8 and Arg-11. Residues Asp-21 and Asp-23 each coordinate Mg(2+). Residues Arg-91, Arg-137, and Arg-140 each coordinate ATP. Residues Arg-91, Arg-137, and Arg-140 each coordinate CTP. An HD domain is found at 226-327 (TGVHVMLVID…LRFLQETDAL (102 aa)).

Belongs to the tRNA nucleotidyltransferase/poly(A) polymerase family. Bacterial CCA-adding enzyme type 1 subfamily. Monomer. Can also form homodimers and oligomers. It depends on Mg(2+) as a cofactor. The cofactor is Ni(2+).

The enzyme catalyses a tRNA precursor + 2 CTP + ATP = a tRNA with a 3' CCA end + 3 diphosphate. It carries out the reaction a tRNA with a 3' CCA end + 2 CTP + ATP = a tRNA with a 3' CCACCA end + 3 diphosphate. In terms of biological role, catalyzes the addition and repair of the essential 3'-terminal CCA sequence in tRNAs without using a nucleic acid template. Adds these three nucleotides in the order of C, C, and A to the tRNA nucleotide-73, using CTP and ATP as substrates and producing inorganic pyrophosphate. tRNA 3'-terminal CCA addition is required both for tRNA processing and repair. Also involved in tRNA surveillance by mediating tandem CCA addition to generate a CCACCA at the 3' terminus of unstable tRNAs. While stable tRNAs receive only 3'-terminal CCA, unstable tRNAs are marked with CCACCA and rapidly degraded. The protein is Multifunctional CCA protein of Methylobacillus flagellatus (strain ATCC 51484 / DSM 6875 / VKM B-1610 / KT).